A 412-amino-acid chain; its full sequence is Peptidase T (412 aa).

Residue His81 participates in Zn(2+) binding. Asp83 is an active-site residue. Asp144 contributes to the Zn(2+) binding site. Catalysis depends on Glu178, which acts as the Proton acceptor. Zn(2+) is bound by residues Glu179, Asp201, and His383.

This sequence belongs to the peptidase M20B family. The cofactor is Zn(2+).

It is found in the cytoplasm. It catalyses the reaction Release of the N-terminal residue from a tripeptide.. Functionally, cleaves the N-terminal amino acid of tripeptides. The protein is Peptidase T of Bacillus cereus (strain Q1).